A 372-amino-acid chain; its full sequence is NAD(P)H-quinone oxidoreductase subunit 1 (372 aa).

Transmembrane regions (helical) follow at residues 27-47 (LLWLPLPMLMMLIVATVGVLV), 65-85 (PEYIGPLGILAPLADGLKLIF), 97-117 (WLFTLGPAVVVIPVFLSYIIV), 128-148 (LAMGVFLWIALSSIAPIGLLM), 176-196 (LALAVLAVAMMSNGLGTVEIV), 204-224 (ILSWNVWRQPIGFLVFWIAAL), 254-274 (FALFYLGAYVNLVLSALLVSV), 308-328 (VLGITMTLIKAYFFVFLAILL), and 347-367 (FLLPVGLVNLLLTAGLKLAFP).

The protein belongs to the complex I subunit 1 family. NDH-1 is composed of at least 11 different subunits.

It is found in the cellular thylakoid membrane. It carries out the reaction a plastoquinone + NADH + (n+1) H(+)(in) = a plastoquinol + NAD(+) + n H(+)(out). The catalysed reaction is a plastoquinone + NADPH + (n+1) H(+)(in) = a plastoquinol + NADP(+) + n H(+)(out). Functionally, NDH-1 shuttles electrons from an unknown electron donor, via FMN and iron-sulfur (Fe-S) centers, to quinones in the respiratory and/or the photosynthetic chain. The immediate electron acceptor for the enzyme in this species is believed to be plastoquinone. Couples the redox reaction to proton translocation, and thus conserves the redox energy in a proton gradient. The polypeptide is NAD(P)H-quinone oxidoreductase subunit 1 (Thermosynechococcus vestitus (strain NIES-2133 / IAM M-273 / BP-1)).